The following is a 568-amino-acid chain: DNA mismatch repair protein MutL (568 aa).

It belongs to the DNA mismatch repair MutL/HexB family.

Functionally, this protein is involved in the repair of mismatches in DNA. It is required for dam-dependent methyl-directed DNA mismatch repair. May act as a 'molecular matchmaker', a protein that promotes the formation of a stable complex between two or more DNA-binding proteins in an ATP-dependent manner without itself being part of a final effector complex. This is DNA mismatch repair protein MutL from Thermosipho africanus (strain TCF52B).